The following is a 376-amino-acid chain: N-acetyldiaminopimelate deacetylase (376 aa).

Asp69 is a catalytic residue. The active-site Proton acceptor is the Glu128.

The protein belongs to the peptidase M20A family. N-acetyldiaminopimelate deacetylase subfamily.

The enzyme catalyses N-acetyl-(2S,6S)-2,6-diaminopimelate + H2O = (2S,6S)-2,6-diaminopimelate + acetate. It participates in amino-acid biosynthesis; L-lysine biosynthesis via DAP pathway; LL-2,6-diaminopimelate from (S)-tetrahydrodipicolinate (acetylase route): step 3/3. Catalyzes the conversion of N-acetyl-diaminopimelate to diaminopimelate and acetate. The sequence is that of N-acetyldiaminopimelate deacetylase from Bacillus cereus (strain 03BB102).